A 429-amino-acid chain; its full sequence is Ribosomal RNA small subunit methyltransferase B (429 aa).

Residues 254 to 260 (CAAPGGK), Asp-277, Asp-303, and Asp-322 contribute to the S-adenosyl-L-methionine site. The active-site Nucleophile is the Cys-375.

Belongs to the class I-like SAM-binding methyltransferase superfamily. RsmB/NOP family.

The protein localises to the cytoplasm. The catalysed reaction is cytidine(967) in 16S rRNA + S-adenosyl-L-methionine = 5-methylcytidine(967) in 16S rRNA + S-adenosyl-L-homocysteine + H(+). In terms of biological role, specifically methylates the cytosine at position 967 (m5C967) of 16S rRNA. The chain is Ribosomal RNA small subunit methyltransferase B from Escherichia coli (strain SMS-3-5 / SECEC).